Consider the following 28-residue polypeptide: Ranatuerin-2SEb (28 aa).

Cysteines 23 and 28 form a disulfide.

Expressed by the skin glands.

It is found in the secreted. Its function is as follows. Mast cell degranulating peptide. Causes histamine release from rat peritoneal mast cells in vitro. Has antibacterial activity against the Gram-negative bacterium E.coli K12 and Gram-positive bacterium M.luteus NCT C2665. The protein is Ranatuerin-2SEb of Lithobates sevosus (Dusky gopher frog).